The following is a 305-amino-acid chain: tRNA dimethylallyltransferase (305 aa).

8 to 15 is a binding site for ATP; that stretch reads GPTGTGKS. Substrate is bound at residue 10–15; the sequence is TGTGKS.

Belongs to the IPP transferase family. As to quaternary structure, monomer. Mg(2+) is required as a cofactor.

It carries out the reaction adenosine(37) in tRNA + dimethylallyl diphosphate = N(6)-dimethylallyladenosine(37) in tRNA + diphosphate. Its function is as follows. Catalyzes the transfer of a dimethylallyl group onto the adenine at position 37 in tRNAs that read codons beginning with uridine, leading to the formation of N6-(dimethylallyl)adenosine (i(6)A). The protein is tRNA dimethylallyltransferase of Mycobacterium sp. (strain JLS).